The primary structure comprises 334 residues: Atypical chemokine receptor 1 (334 aa).

Residues 1-61 (MGNCLYPVET…CNLLDRSSLP (61 aa)) lie on the Extracellular side of the membrane. Residues Asn16, Asn26, and Asn32 are each glycosylated (N-linked (GlcNAc...) asparagine). 2 disulfide bridges follow: Cys49–Cys274 and Cys127–Cys193. A helical membrane pass occupies residues 62–82 (FFMLTSVLGMLASGSILFAIL). Residues 83-93 (RPFFHWQICPS) lie on the Cytoplasmic side of the membrane. Residues 94–114 (WPILAELAVGSALFSIAVPIL) form a helical membrane-spanning segment. Residues 115–127 (APGLHSAHSTALC) are Extracellular-facing. Residues 128–151 (NLGYWVWYTSAFAQALLIGCYACL) form a helical membrane-spanning segment. Over 152–164 (NPRLNIGQLRGFT) the chain is Cytoplasmic. The helical transmembrane segment at 165–185 (LGLSVGLWGAAALSGLPVALA) threads the bilayer. The Extracellular portion of the chain corresponds to 186–205 (SDVYNGFCTFPSSRDMEALK). Residues 206–226 (YTHYAICFTIFTVLPLTLLAA) traverse the membrane as a helical segment. Residues 227–242 (KGLKIALSKGPGPWVS) are Cytoplasmic-facing. Residues 243-263 (VLWIWFIFWWPHGMVLIFDAL) form a helical membrane-spanning segment. The Extracellular segment spans residues 264–285 (VRSKTVLLYTCQSQKILDAMLN). Asn285 is a glycosylation site (N-linked (GlcNAc...) asparagine). The helical transmembrane segment at 286-306 (VTEALSMLHCVATPLLLALFC) threads the bilayer. Topologically, residues 307–334 (HQTTRRSLSSLSLPTRQASQMDALAGKS) are cytoplasmic.

Belongs to the G-protein coupled receptor 1 family. Atypical chemokine receptor subfamily. As to expression, expressed in liver and brain.

It is found in the early endosome. Its subcellular location is the recycling endosome. The protein resides in the membrane. In terms of biological role, atypical chemokine receptor that controls chemokine levels and localization via high-affinity chemokine binding that is uncoupled from classic ligand-driven signal transduction cascades, resulting instead in chemokine sequestration, degradation, or transcytosis. Also known as interceptor (internalizing receptor) or chemokine-scavenging receptor or chemokine decoy receptor. Has a promiscuous chemokine-binding profile, interacting with inflammatory chemokines of both the CXC and the CC subfamilies but not with homeostatic chemokines. Acts as a receptor for chemokines including CCL2, CCL5, CCL7, CCL11, CCL13, CCL14, CCL17, CXCL5, CXCL6, IL8/CXCL8, CXCL11, GRO, RANTES, MCP-1 and TARC. May regulate chemokine bioavailability and, consequently, leukocyte recruitment through two distinct mechanisms: when expressed in endothelial cells, it sustains the abluminal to luminal transcytosis of tissue-derived chemokines and their subsequent presentation to circulating leukocytes; when expressed in erythrocytes, serves as blood reservoir of cognate chemokines but also as a chemokine sink, buffering potential surges in plasma chemokine levels. Its function is as follows. (Microbial infection) Acts as a receptor for the malaria parasite Plasmodium yoelii in mature erythrocytes but not reticulocytes. The chain is Atypical chemokine receptor 1 (Ackr1) from Mus musculus (Mouse).